The sequence spans 120 residues: MPVYVEFDVPADLADDALEALEVARDTGTVKKGTNETTKAIERGTAELVLVAEDVSPEEIVMHLPELADEKGITLAFVETQDEIGQAAGLEVGSAAAAIIDAGEADSDVDDITAKIEELR.

The protein belongs to the eukaryotic ribosomal protein eL8 family. In terms of assembly, part of the 50S ribosomal subunit. Probably part of the RNase P complex.

It localises to the cytoplasm. Its function is as follows. Multifunctional RNA-binding protein that recognizes the K-turn motif in ribosomal RNA, the RNA component of RNase P, box H/ACA, box C/D and box C'/D' sRNAs. The sequence is that of Large ribosomal subunit protein eL8 from Haloquadratum walsbyi (strain DSM 16790 / HBSQ001).